We begin with the raw amino-acid sequence, 605 residues long: LysM domain receptor-like kinase 10 (605 aa).

The N-terminal stretch at 1–20 (MFSLPALLIGACAFAAAAVA) is a signal peptide. At 21 to 245 (ASGDGCRAGC…GMGNSLSGGA (225 aa)) the chain is on the extracellular side. 3 disulfides stabilise this stretch: C26–C89, C30–C161, and C87–C159. N44 carries N-linked (GlcNAc...) asparagine glycosylation. Chitin-binding positions include 115–121 (GGDTYDA) and 142–148 (PPGRIPG). Residues N154 and N158 are each glycosylated (N-linked (GlcNAc...) asparagine). Residues 174–221 (LTYPLWDGETLESVAAQYGFSSPAEMELIRRYNPGMGGVSGKGIVFIP) enclose the LysM domain. N226 is a glycosylation site (N-linked (GlcNAc...) asparagine). The helical transmembrane segment at 246–266 (IAGIVIACIAIFIVAIWLIIM) threads the bilayer. Topologically, residues 267–605 (FYRWQKFRKA…DLRDMDYHPF (339 aa)) are cytoplasmic. At S278 the chain carries Phosphoserine. The Protein kinase domain occupies 317 to 591 (FSMEHKIGQG…RSVVVALMAL (275 aa)). ATP is bound by residues 323-331 (IGQGGFGSV) and K344. The active-site Proton acceptor is D436.

This sequence belongs to the protein kinase superfamily. Ser/Thr protein kinase family.

It localises to the cell membrane. The catalysed reaction is L-seryl-[protein] + ATP = O-phospho-L-seryl-[protein] + ADP + H(+). It carries out the reaction L-threonyl-[protein] + ATP = O-phospho-L-threonyl-[protein] + ADP + H(+). The polypeptide is LysM domain receptor-like kinase 10 (Oryza sativa subsp. japonica (Rice)).